Here is a 415-residue protein sequence, read N- to C-terminus: MAENGDNEKMAALEAKICHQIEYYFGDFNLPRDKFLKEQIKLDEGWVPLETMIKFNRLNRLTTDFNVIVQALSKSKANLMEVSADKTKIRRSPSRPLPEVTDEYKNDVKNRSVYIKGFPTDATLDDIKEWLDDKGQILNIQMRRTLHKTFKGSIFAVFDSIQSAKKFVDTPGQKYKDTNLLILFKEDYFAKKNEERKQSKVEAKLKAKQEHEGRHKPGSTETRALEGKMGCLLKFSGDLDDQTCREDFHFLFSNHGEIKWIDFVRGAKEGIILFKEKAKDALEKARSANNGNLLLRNKKVTWKVLEGHAEKDAMKKITDDQQESLNKWKSKGGHAARRFKGSHVFTAARRFKGRGKGNRPAYAGAPKGRGQFQGRRTRFDDDDHRRGPVKRGIDGRDREEPASKHKKRENGARDK.

The HTH La-type RNA-binding domain occupies 7 to 99 (NEKMAALEAK…RRSPSRPLPE (93 aa)). Ser-92 and Ser-94 each carry phosphoserine. An RRM domain is found at 111–187 (RSVYIKGFPT…TNLLILFKED (77 aa)). Position 116 is an N6-acetyllysine (Lys-116). Thr-120 carries the post-translational modification Phosphothreonine. N6-acetyllysine occurs at positions 128 and 327. The region spanning 226-343 (EGKMGCLLKF…HAARRFKGSH (118 aa)) is the xRRM domain. Positions 323–415 (ESLNKWKSKG…KKRENGARDK (93 aa)) are disordered. Residues 328 to 341 (WKSKGGHAARRFKG) are compositionally biased toward basic residues. At Lys-356 the chain carries N6-acetyllysine. Thr-377 carries the phosphothreonine modification. A compositionally biased stretch (basic and acidic residues) spans 377–415 (TRFDDDDHRRGPVKRGIDGRDREEPASKHKKRENGARDK).

As to quaternary structure, interacts with DDX15. May interact with RUFY1. Phosphorylated.

The protein localises to the nucleus. Binds to the 3' poly(U) terminus of nascent RNA polymerase III transcripts, protecting them from exonuclease digestion and facilitating their folding and maturation. The polypeptide is Lupus La protein homolog (Ssb) (Rattus norvegicus (Rat)).